The following is a 392-amino-acid chain: Queuine tRNA-ribosyltransferase (392 aa).

The active-site Proton acceptor is D93. Substrate is bound by residues 93 to 97 (DSGGY), D147, Q189, and G216. The tract at residues 247-253 (GVGAPED) is RNA binding. D266 acts as the Nucleophile in catalysis. Positions 271–275 (TRVAR) are RNA binding; important for wobble base 34 recognition. 4 residues coordinate Zn(2+): C304, C306, C309, and H335.

The protein belongs to the queuine tRNA-ribosyltransferase family. As to quaternary structure, homodimer. Within each dimer, one monomer is responsible for RNA recognition and catalysis, while the other monomer binds to the replacement base PreQ1. The cofactor is Zn(2+).

The enzyme catalyses 7-aminomethyl-7-carbaguanine + guanosine(34) in tRNA = 7-aminomethyl-7-carbaguanosine(34) in tRNA + guanine. It participates in tRNA modification; tRNA-queuosine biosynthesis. Functionally, catalyzes the base-exchange of a guanine (G) residue with the queuine precursor 7-aminomethyl-7-deazaguanine (PreQ1) at position 34 (anticodon wobble position) in tRNAs with GU(N) anticodons (tRNA-Asp, -Asn, -His and -Tyr). Catalysis occurs through a double-displacement mechanism. The nucleophile active site attacks the C1' of nucleotide 34 to detach the guanine base from the RNA, forming a covalent enzyme-RNA intermediate. The proton acceptor active site deprotonates the incoming PreQ1, allowing a nucleophilic attack on the C1' of the ribose to form the product. After dissociation, two additional enzymatic reactions on the tRNA convert PreQ1 to queuine (Q), resulting in the hypermodified nucleoside queuosine (7-(((4,5-cis-dihydroxy-2-cyclopenten-1-yl)amino)methyl)-7-deazaguanosine). The protein is Queuine tRNA-ribosyltransferase of Dehalococcoides mccartyi (strain ATCC BAA-2266 / KCTC 15142 / 195) (Dehalococcoides ethenogenes (strain 195)).